The primary structure comprises 97 residues: Putative pterin-4-alpha-carbinolamine dehydratase (97 aa).

This sequence belongs to the pterin-4-alpha-carbinolamine dehydratase family.

The catalysed reaction is (4aS,6R)-4a-hydroxy-L-erythro-5,6,7,8-tetrahydrobiopterin = (6R)-L-erythro-6,7-dihydrobiopterin + H2O. This chain is Putative pterin-4-alpha-carbinolamine dehydratase, found in Cyanothece sp. (strain PCC 7425 / ATCC 29141).